The primary structure comprises 174 residues: Adenine phosphoribosyltransferase (174 aa).

This sequence belongs to the purine/pyrimidine phosphoribosyltransferase family. Homodimer.

It localises to the cytoplasm. It carries out the reaction AMP + diphosphate = 5-phospho-alpha-D-ribose 1-diphosphate + adenine. The protein operates within purine metabolism; AMP biosynthesis via salvage pathway; AMP from adenine: step 1/1. In terms of biological role, catalyzes a salvage reaction resulting in the formation of AMP, that is energically less costly than de novo synthesis. The polypeptide is Adenine phosphoribosyltransferase (Mycobacterium sp. (strain JLS)).